Reading from the N-terminus, the 367-residue chain is Epoxide hydrolase 3 (367 aa).

The helical transmembrane segment at 22-42 threads the bilayer; sequence ALVMSLVYLAALVAAFVYSCI. D180 functions as the Nucleophile in the catalytic mechanism. Y288 (proton donor) is an active-site residue. H344 functions as the Proton acceptor in the catalytic mechanism.

This sequence belongs to the AB hydrolase superfamily. Epoxide hydrolase family. As to expression, predominantly expressed in skin, esophagus, lung and tongue and to a lesser extent in pancreas and eye.

The protein resides in the microsome membrane. It carries out the reaction an epoxide + H2O = an ethanediol. The enzyme catalyses 9,10-epoxyoctadecanoate + H2O = 9,10-dihydroxyoctadecanoate. The catalysed reaction is 9,10-epoxy-(12Z)-octadecenoate + H2O = 9,10-dihydroxy-(12Z)-octadecenoate. It catalyses the reaction 8,9-epoxy-(5Z,11Z,14Z)-eicosatrienoate + H2O = 8,9-dihydroxy-(5Z,11Z,14Z)-eicosatrienoate. It carries out the reaction 11,12-epoxy-(5Z,8Z,14Z)-eicosatrienoate + H2O = 11,12-dihydroxy-(5Z,8Z,14Z)-eicosatrienoate. The enzyme catalyses 14,15-epoxy-(5Z,8Z,11Z)-eicosatrienoate + H2O = 14,15-dihydroxy-(5Z,8Z,11Z)-eicosatrienoate. Inhibited by 1-(1-acetylpiperidin-4-yl)-3-(4-(trifl uoromethoxy)phenyl)urea (TPAU), 1-cyclohexyl-3-dodecylurea (CDU), 12-(3-adamantan-1-yl-ureido)-dodecanoic acid (AUDA), 1-((3S, 5S, 7S)-adamantan-1-yl)-3-(5-(2-(2-ethoxyethoxy) ethoxy)pentyl)urea (AEPU) and to a lesser extent by 8-(3-((3S, 5S, 7S)-adamantan-1-yl)ureido) octanoic acid (AUOA). Functionally, catalyzes the hydrolysis of epoxide-containing fatty acids. Active in vitro against epoxyeicosatrienoic acids (EETs) including 8,9-EET, 9,10-EET, 11,12-EET and 14,15-EET and leukotoxin. In Mus musculus (Mouse), this protein is Epoxide hydrolase 3 (Ephx3).